We begin with the raw amino-acid sequence, 118 residues long: Holo-[acyl-carrier-protein] synthase (118 aa).

2 residues coordinate Mg(2+): aspartate 9 and glutamate 52.

Belongs to the P-Pant transferase superfamily. AcpS family. The cofactor is Mg(2+).

Its subcellular location is the cytoplasm. The catalysed reaction is apo-[ACP] + CoA = holo-[ACP] + adenosine 3',5'-bisphosphate + H(+). In terms of biological role, transfers the 4'-phosphopantetheine moiety from coenzyme A to a Ser of acyl-carrier-protein. This chain is Holo-[acyl-carrier-protein] synthase, found in Frankia casuarinae (strain DSM 45818 / CECT 9043 / HFP020203 / CcI3).